The sequence spans 572 residues: MATIGRRAYAEMFGPTAGDRLRLADTDLVVEVEADYTLRAGSYGEEVKFGGGKTIRDGMAQSQKTRAEGAMDTVMTNALIMDHWGIVKADIGLKGGRIAVIGKAGNPDTQPGVDMIIGPGTEIISCEGMIVTAGGIDSHIHFICPQQIEEALTSGVTTMLGGGTGPATGTFATTCTPGPWNIERMLQAADAFPMNLGFLGKGNASLPAALHEQINAGVIGLKLHEDWGTTPAAISNCLDVAEETDTQVAIHSDTLNESGFVENTIAATKGRTLCAFHTEGAGGGHAPDILRVVGEQNFLPSSTNPTMPYTVNTLDEHVDMLMVCHHLDAGIAEDLAFAESRIRKETIAAEDILHDLGAISMFSSDSQAMGRVGEVIIRTWQTAHKMKQQRGKLPGDSDRHDNFRAKRYISKYTINPAIAHGISHEVGSVEPGKWADLVVWKPAFFGIKPSVILKGGFIAMAAMGDPNASIPTPQPVHYRPMFGGFGGAIAKGSLTFVSQAGLNADIQKRFGLAKTLSAVKNIRGVRKQHMIHNDYAPKMEVDAQTYLVRADGLLLTCEPAVSLPMTQRYFLF.

Residues 134–572 (GGIDSHIHFI…LPMTQRYFLF (439 aa)) enclose the Urease domain. The Ni(2+) site is built by H139, H141, and K222. Position 222 is an N6-carboxylysine (K222). A substrate-binding site is contributed by H224. Positions 251 and 277 each coordinate Ni(2+). The Proton donor role is filled by H325. D365 lines the Ni(2+) pocket.

It belongs to the metallo-dependent hydrolases superfamily. Urease alpha subunit family. In terms of assembly, heterotrimer of UreA (gamma), UreB (beta) and UreC (alpha) subunits. Three heterotrimers associate to form the active enzyme. Requires Ni cation as cofactor. In terms of processing, carboxylation allows a single lysine to coordinate two nickel ions.

The protein resides in the cytoplasm. The enzyme catalyses urea + 2 H2O + H(+) = hydrogencarbonate + 2 NH4(+). Its pathway is nitrogen metabolism; urea degradation; CO(2) and NH(3) from urea (urease route): step 1/1. This is Urease subunit alpha from Polaromonas sp. (strain JS666 / ATCC BAA-500).